Here is a 298-residue protein sequence, read N- to C-terminus: Lipoyl synthase 1 (298 aa).

[4Fe-4S] cluster-binding residues include C34, C39, C45, C60, C64, C67, and S274. In terms of domain architecture, Radical SAM core spans 46 to 263 (FYQGTATFLM…RRLGESMGFL (218 aa)).

This sequence belongs to the radical SAM superfamily. Lipoyl synthase family. [4Fe-4S] cluster serves as cofactor.

The protein resides in the cytoplasm. It carries out the reaction [[Fe-S] cluster scaffold protein carrying a second [4Fe-4S](2+) cluster] + N(6)-octanoyl-L-lysyl-[protein] + 2 oxidized [2Fe-2S]-[ferredoxin] + 2 S-adenosyl-L-methionine + 4 H(+) = [[Fe-S] cluster scaffold protein] + N(6)-[(R)-dihydrolipoyl]-L-lysyl-[protein] + 4 Fe(3+) + 2 hydrogen sulfide + 2 5'-deoxyadenosine + 2 L-methionine + 2 reduced [2Fe-2S]-[ferredoxin]. It functions in the pathway protein modification; protein lipoylation via endogenous pathway; protein N(6)-(lipoyl)lysine from octanoyl-[acyl-carrier-protein]: step 2/2. In terms of biological role, catalyzes the radical-mediated insertion of two sulfur atoms into the C-6 and C-8 positions of the octanoyl moiety bound to the lipoyl domains of lipoate-dependent enzymes, thereby converting the octanoylated domains into lipoylated derivatives. In Thermosynechococcus vestitus (strain NIES-2133 / IAM M-273 / BP-1), this protein is Lipoyl synthase 1.